A 156-amino-acid chain; its full sequence is ATP synthase subunit b (156 aa).

A helical transmembrane segment spans residues 7-29 (LFAQMVVFLVLAWFTMKFVWPPL).

It belongs to the ATPase B chain family. As to quaternary structure, F-type ATPases have 2 components, F(1) - the catalytic core - and F(0) - the membrane proton channel. F(1) has five subunits: alpha(3), beta(3), gamma(1), delta(1), epsilon(1). F(0) has three main subunits: a(1), b(2) and c(10-14). The alpha and beta chains form an alternating ring which encloses part of the gamma chain. F(1) is attached to F(0) by a central stalk formed by the gamma and epsilon chains, while a peripheral stalk is formed by the delta and b chains.

It localises to the cell inner membrane. Functionally, f(1)F(0) ATP synthase produces ATP from ADP in the presence of a proton or sodium gradient. F-type ATPases consist of two structural domains, F(1) containing the extramembraneous catalytic core and F(0) containing the membrane proton channel, linked together by a central stalk and a peripheral stalk. During catalysis, ATP synthesis in the catalytic domain of F(1) is coupled via a rotary mechanism of the central stalk subunits to proton translocation. In terms of biological role, component of the F(0) channel, it forms part of the peripheral stalk, linking F(1) to F(0). The sequence is that of ATP synthase subunit b from Burkholderia multivorans (strain ATCC 17616 / 249).